A 237-amino-acid polypeptide reads, in one-letter code: Ribonuclease PH (237 aa).

Phosphate is bound by residues R86 and 124-126; that span reads GTR.

It belongs to the RNase PH family. In terms of assembly, homohexameric ring arranged as a trimer of dimers.

It carries out the reaction tRNA(n+1) + phosphate = tRNA(n) + a ribonucleoside 5'-diphosphate. Functionally, phosphorolytic 3'-5' exoribonuclease that plays an important role in tRNA 3'-end maturation. Removes nucleotide residues following the 3'-CCA terminus of tRNAs; can also add nucleotides to the ends of RNA molecules by using nucleoside diphosphates as substrates, but this may not be physiologically important. Probably plays a role in initiation of 16S rRNA degradation (leading to ribosome degradation) during starvation. The chain is Ribonuclease PH from Shewanella frigidimarina (strain NCIMB 400).